Reading from the N-terminus, the 190-residue chain is Lipid A acyltransferase PagP (190 aa).

The signal sequence occupies residues 1-18; it reads MKRLISCLTIICALNASA. Residues His60, Asp103, and Ser104 contribute to the active site.

This sequence belongs to the lipid A palmitoyltransferase family. As to quaternary structure, homodimer.

It localises to the cell outer membrane. It catalyses the reaction a lipid A + a 1,2-diacyl-sn-glycero-3-phosphocholine = a hepta-acyl lipid A + a 2-acyl-sn-glycero-3-phosphocholine. The enzyme catalyses a lipid IVA + a 1,2-diacyl-sn-glycero-3-phosphocholine = a lipid IVB + a 2-acyl-sn-glycero-3-phosphocholine. The catalysed reaction is a lipid IIA + a 1,2-diacyl-sn-glycero-3-phosphocholine = a lipid IIB + a 2-acyl-sn-glycero-3-phosphocholine. Functionally, transfers a fatty acid residue from the sn-1 position of a phospholipid to the N-linked hydroxyfatty acid chain on the proximal unit of lipid A or its precursors. This Legionella pneumophila (strain Corby) protein is Lipid A acyltransferase PagP.